A 383-amino-acid chain; its full sequence is Small ribosomal subunit protein mS31 (383 aa).

Residues 1–21 constitute a mitochondrion transit peptide; it reads MLRSLCSIAVRLGGARQPRLL. The stretch at 158–187 forms a coiled coil; the sequence is VNEAQIKLQEQRKALLNDVREKVEQEEVEE.

The protein belongs to the mitochondrion-specific ribosomal protein mS31 family. In terms of assembly, component of the mitochondrial ribosome small subunit (28S) which comprises a 12S rRNA and about 30 distinct proteins.

It localises to the mitochondrion. The protein is Small ribosomal subunit protein mS31 (mrps-31) of Caenorhabditis elegans.